A 93-amino-acid chain; its full sequence is Large ribosomal subunit protein bL27 (93 aa).

A propeptide spanning residues 1-9 (MLRLDLQFF) is cleaved from the precursor.

This sequence belongs to the bacterial ribosomal protein bL27 family. Post-translationally, the N-terminus is cleaved by ribosomal processing cysteine protease Prp.

This Bacillus licheniformis (strain ATCC 14580 / DSM 13 / JCM 2505 / CCUG 7422 / NBRC 12200 / NCIMB 9375 / NCTC 10341 / NRRL NRS-1264 / Gibson 46) protein is Large ribosomal subunit protein bL27.